The sequence spans 476 residues: DnaJ protein P58IPK homolog A (476 aa).

The signal sequence occupies residues 1–28 (MVAMARWPWRVLLPLLLLHSSPVFFVFA). 8 TPR repeats span residues 36 to 69 (PSTL…EPNH), 70 to 103 (SEAY…KPGS), 116 to 150 (AQNA…SPDC), 152 to 184 (KAKL…DEDN), 185 to 218 (LDAL…DPEH), 231 to 264 (LVKK…DPDH), 269 to 302 (VHLY…DGEL), and 304 to 336 (DALT…SPQD). One can recognise a J domain in the interval 357 to 423 (DWYKILGISK…DKRVRYDRGE (67 aa)).

Interacts with BIP1.

It localises to the endoplasmic reticulum lumen. May play a role in protein folding in the endoplasmic reticulum. This is DnaJ protein P58IPK homolog A from Oryza sativa subsp. japonica (Rice).